The chain runs to 230 residues: UPF0758 protein Glov_0523 (230 aa).

The MPN domain maps to 108-230 (RFTSPAQVFD…YFSFVESGLL (123 aa)). Zn(2+) contacts are provided by His179, His181, and Asp192. The short motif at 179-192 (HNHPSGDPAPSRED) is the JAMM motif element.

It belongs to the UPF0758 family.

In Trichlorobacter lovleyi (strain ATCC BAA-1151 / DSM 17278 / SZ) (Geobacter lovleyi), this protein is UPF0758 protein Glov_0523.